The following is a 353-amino-acid chain: Protein MGF 360-13L (353 aa).

Belongs to the asfivirus MGF 360 family.

Its function is as follows. Plays a role in virus cell tropism, and may be required for efficient virus replication in macrophages. In African swine fever virus (isolate Pig/Kenya/KEN-50/1950) (ASFV), this protein is Protein MGF 360-13L.